A 420-amino-acid polypeptide reads, in one-letter code: COP9 signalosome complex subunit 5 (420 aa).

An MPN domain is found at 73-208 (AALSALACMK…IGAFRTMPET (136 aa)). Residues histidine 154, histidine 156, and aspartate 167 each coordinate Zn(2+). Residues 154–167 (HSHPGYGCWLSGID) carry the JAMM motif motif.

It belongs to the peptidase M67A family. CSN5 subfamily. As to quaternary structure, component of the COP9 signalosome (CSN) complex.

The protein localises to the cytoplasm. Its subcellular location is the nucleus. Its function is as follows. Catalytic component of the COP9 signalosome (CSN) complex that acts as an regulator of the ubiquitin (Ubl) conjugation pathway by mediating the deneddylation of the cullin subunit of SCF-type E3 ubiquitin-protein ligase complexes. The CSN complex is involved in the regulation of the mating pheromone response. The polypeptide is COP9 signalosome complex subunit 5 (RRI1) (Eremothecium gossypii (strain ATCC 10895 / CBS 109.51 / FGSC 9923 / NRRL Y-1056) (Yeast)).